The chain runs to 346 residues: Sensor histidine kinase GraS (346 aa).

The next 2 membrane-spanning stretches (helical) occupy residues 15-35 (MNWIFWILFLNLLMLGISLID) and 43-63 (LFYIVSLNLSLTMIFLILTYF). Positions 126–332 (EFVHDIKTPV…TVRLIFPLQN (207 aa)) constitute a Histidine kinase domain.

As to quaternary structure, interacts with GraX.

The protein localises to the cell membrane. The enzyme catalyses ATP + protein L-histidine = ADP + protein N-phospho-L-histidine.. Functionally, member of the two-component regulatory system GraR/GraS involved in resistance against cationic antimicrobial peptides (CAMPs). Functions as a sensor protein kinase which phosphorylates GraR through the auxiliary protein GraX. In turn, GraR up-regulates many genes such as adhesins, exoproteins, transporters, toxins, and proteins involved in cell wall synthesis. Down-regulates the expression of many genes involved in RNA and amino acid synthesis or glycolysis. The polypeptide is Sensor histidine kinase GraS (graS) (Staphylococcus aureus (strain Mu50 / ATCC 700699)).